Here is a 346-residue protein sequence, read N- to C-terminus: tRNA-specific 2-thiouridylase MnmA (346 aa).

6–13 lines the ATP pocket; it reads AMSGGTDS. The active-site Nucleophile is C90. The cysteines at positions 90 and 187 are disulfide-linked. ATP is bound at residue G114. The tract at residues 137–139 is interaction with tRNA; sequence KDQ. The active-site Cysteine persulfide intermediate is the C187. Residues 292–293 form an interaction with tRNA region; it reads RY.

Belongs to the MnmA/TRMU family.

The protein localises to the cytoplasm. The catalysed reaction is S-sulfanyl-L-cysteinyl-[protein] + uridine(34) in tRNA + AH2 + ATP = 2-thiouridine(34) in tRNA + L-cysteinyl-[protein] + A + AMP + diphosphate + H(+). Its function is as follows. Catalyzes the 2-thiolation of uridine at the wobble position (U34) of tRNA, leading to the formation of s(2)U34. This Nitratidesulfovibrio vulgaris (strain DP4) (Desulfovibrio vulgaris) protein is tRNA-specific 2-thiouridylase MnmA.